The following is an 85-amino-acid chain: UPF0335 protein BARBAKC583_0130 (85 aa).

The protein belongs to the UPF0335 family.

The protein is UPF0335 protein BARBAKC583_0130 of Bartonella bacilliformis (strain ATCC 35685 / KC583 / Herrer 020/F12,63).